The sequence spans 550 residues: Arginine--tRNA ligase (550 aa).

The short motif at 130–140 is the 'HIGH' region element; it reads ANPTGPIHIGG.

It belongs to the class-I aminoacyl-tRNA synthetase family. As to quaternary structure, monomer.

It is found in the cytoplasm. It carries out the reaction tRNA(Arg) + L-arginine + ATP = L-arginyl-tRNA(Arg) + AMP + diphosphate. This is Arginine--tRNA ligase from Mycobacterium sp. (strain JLS).